We begin with the raw amino-acid sequence, 307 residues long: UDP-3-O-acyl-N-acetylglucosamine deacetylase (307 aa).

Zn(2+) is bound by residues histidine 78, histidine 237, and aspartate 241. Histidine 264 acts as the Proton donor in catalysis.

Belongs to the LpxC family. Zn(2+) is required as a cofactor.

The enzyme catalyses a UDP-3-O-[(3R)-3-hydroxyacyl]-N-acetyl-alpha-D-glucosamine + H2O = a UDP-3-O-[(3R)-3-hydroxyacyl]-alpha-D-glucosamine + acetate. It participates in glycolipid biosynthesis; lipid IV(A) biosynthesis; lipid IV(A) from (3R)-3-hydroxytetradecanoyl-[acyl-carrier-protein] and UDP-N-acetyl-alpha-D-glucosamine: step 2/6. Functionally, catalyzes the hydrolysis of UDP-3-O-myristoyl-N-acetylglucosamine to form UDP-3-O-myristoylglucosamine and acetate, the committed step in lipid A biosynthesis. The sequence is that of UDP-3-O-acyl-N-acetylglucosamine deacetylase from Azoarcus sp. (strain BH72).